A 229-amino-acid polypeptide reads, in one-letter code: Potassium/proton antiporter CemA (229 aa).

Helical transmembrane passes span 7 to 27, 114 to 134, 154 to 174, and 189 to 209; these read FTPL…SLSF, IICF…LVIL, ILLV…ELMI, and IISG…KYWI.

The protein belongs to the CemA family.

Its subcellular location is the plastid. It is found in the chloroplast inner membrane. It carries out the reaction K(+)(in) + H(+)(out) = K(+)(out) + H(+)(in). Its function is as follows. Contributes to K(+)/H(+) antiport activity by supporting proton efflux to control proton extrusion and homeostasis in chloroplasts in a light-dependent manner to modulate photosynthesis. Prevents excessive induction of non-photochemical quenching (NPQ) under continuous-light conditions. Indirectly promotes efficient inorganic carbon uptake into chloroplasts. In Acorus calamus var. americanus (American sweet flag), this protein is Potassium/proton antiporter CemA.